The chain runs to 565 residues: Estrogen receptor gamma (565 aa).

Residues 1–168 (MAVASSPEKD…TSGGKTDLHY (168 aa)) are modulating. 2 consecutive NR C4-type zinc fingers follow at residues 169–189 (CAVC…CEGC) and 205–229 (CPAT…LRKC). Positions 169–234 (CAVCHDYASG…RLRKCYEVGM (66 aa)) form a DNA-binding region, nuclear receptor. The hinge stretch occupies residues 235–285 (TKCGMRKERGNYRSPQMRRMTRLTSQGRTDSSSVLTGSAVVSLNAPQPSAL). Residues 286–516 (TSEQLIERLM…DLLLEMLDAH (231 aa)) enclose the NR LBD domain. The segment at 522 to 565 (RLPRRSPEQEPEDQADAPAPPHSSGSGPSYTWTPSSSEGAGEPQ) is disordered.

Belongs to the nuclear hormone receptor family. NR3 subfamily. Homodimer. Abundant in the ovary and testes, barely detectable in the brain and muscle and undetectable in the liver.

The protein resides in the nucleus. In terms of biological role, the steroid hormones and their receptors are involved in the regulation of eukaryotic gene expression and affect cellular proliferation and differentiation in target tissues. This is Estrogen receptor gamma (esr3) from Micropogonias undulatus (Atlantic croaker).